Reading from the N-terminus, the 476-residue chain is Cytoplasmic 60S subunit biogenesis factor ZNF622 (476 aa).

Ala2 bears the N-acetylalanine mark. U1-type zinc fingers lie at residues 4–28 (LTCITCRVAFRDAELQRAHYKTDWH) and 69–93 (TYCTACGKKFATFNAYENHLGSRRH). Positions 137-243 (AIKAQPSTSP…AEDAAAEESP (107 aa)) are disordered. A compositionally biased stretch (basic and acidic residues) spans 167 to 177 (VPERDPTEKPP). Acidic residues predominate over residues 195 to 239 (EDGEEEGEEEEEDDEDEDWEDIDSDDGLECEDPGVEDQDAEDAAA). Ser275 is modified (phosphoserine).

Belongs to the REI1 family. Homo- and heterodimer. Associates with pre-60S ribosomal particles. Interacts with MELK and MYBL2. Interacts with DNAJC21. In terms of processing, phosphorylated by MELK. The phosphorylation may redirect the protein to the nucleus. Post-translationally, ubiquitinated by HECTD1, leading to its degradation.

It localises to the cytoplasm. It is found in the nucleus. Pre-60S-associated cytoplasmic factor involved in the cytoplasmic maturation of the 60S subunit. This Mus musculus (Mouse) protein is Cytoplasmic 60S subunit biogenesis factor ZNF622 (Znf622).